A 255-amino-acid chain; its full sequence is Syntaxin-6 (255 aa).

Residue serine 2 is modified to N-acetylserine. Residue serine 2 is modified to Phosphoserine. The interaction with BLTP3B stretch occupies residues 2–112 (SMEDPFFVVK…KDQMSASSVQ (111 aa)). Residues 2 to 168 (SMEDPFFVVK…QAQQQLIVEQ (167 aa)) are required for interaction with VPS51. Residues 2–234 (SMEDPFFVVK…VSHMTSDRRQ (233 aa)) lie on the Cytoplasmic side of the membrane. Residues 41–74 (EEIDWTTNELRNNLRSIEWDLEDLDETISIVEAN) are a coiled coil. Phosphoserine is present on residues serine 129 and serine 152. Residues 163-225 (QLIVEQQDEQ…DNVMKKLAKV (63 aa)) enclose the t-SNARE coiled-coil homology domain. Residues 235 to 255 (WCAIAILFAVLLVVLTLFLVL) form a helical; Anchor for type IV membrane protein membrane-spanning segment.

Belongs to the syntaxin family. Identified in a complex containing STX6, STX12, VAMP4 and VTI1A. Binds EEA1. Interacts with VPS45A and GOPC. Interacts with MARCHF2; the interaction promotes MARCHF2-mediated ubiquitination and degradation of CFTR. Interacts with MARCHF3. Interacts with BLTP3B (via C-terminal coiled-coil domain). Interacts with BAIAP3; this interaction is increased in the presence of calcium. Interacts (via N-terminus) with VPS51. Interacts with VPS13B. In terms of tissue distribution, widely expressed, with relatively higher expression in brain, lung and kidney.

It localises to the golgi apparatus membrane. The protein localises to the golgi apparatus. Its subcellular location is the trans-Golgi network membrane. The protein resides in the recycling endosome membrane. Its function is as follows. SNARE promoting movement of transport vesicles to target membranes. Targets endosomes to the trans-Golgi network, and may therefore function in retrograde trafficking. Together with SNARE STX12, promotes movement of vesicles from endosomes to the cell membrane, and may therefore function in the endocytic recycling pathway. The chain is Syntaxin-6 (Stx6) from Rattus norvegicus (Rat).